Consider the following 475-residue polypeptide: Probable phenylalanine--tRNA ligase alpha subunit (475 aa).

The tract at residues 2 to 151 (TAVAQKIIEN…KRKLVSRRKK (150 aa)) is contains the major tRNA-Phe binding sites. L-phenylalanine contacts are provided by residues threonine 309, 351–353 (QVE), and tyrosine 391. A Mg(2+)-binding site is contributed by glutamate 393. Phenylalanine 417 is an L-phenylalanine binding site.

It belongs to the class-II aminoacyl-tRNA synthetase family. Phe-tRNA synthetase alpha subunit type 2 subfamily. As to quaternary structure, tetramer of two alpha and two beta subunits. Mg(2+) serves as cofactor.

The protein localises to the cytoplasm. It carries out the reaction tRNA(Phe) + L-phenylalanine + ATP = L-phenylalanyl-tRNA(Phe) + AMP + diphosphate + H(+). The polypeptide is Probable phenylalanine--tRNA ligase alpha subunit (Encephalitozoon cuniculi (strain GB-M1) (Microsporidian parasite)).